We begin with the raw amino-acid sequence, 124 residues long: Large ribosomal subunit protein bL20c (124 aa).

It belongs to the bacterial ribosomal protein bL20 family.

It localises to the plastid. The protein localises to the chloroplast. Functionally, binds directly to 23S ribosomal RNA and is necessary for the in vitro assembly process of the 50S ribosomal subunit. It is not involved in the protein synthesizing functions of that subunit. In Euglena gracilis, this protein is Large ribosomal subunit protein bL20c (rpl20).